The following is a 161-amino-acid chain: Alpha-crystallin A chain (161 aa).

A required for complex formation with BFSP1 and BFSP2 region spans residues 1-51 (ALGPFYPSRXXXXXXXXXXXXXXXXXXXXXXXXXXXXQSLFRTVLDSGISE). Gln38 bears the Deamidated glutamine; partial mark. The sHSP domain occupies 40-150 (LFRTVLDSGI…SHSERAIPVS (111 aa)). Residue Lys87 is modified to N6-acetyllysine. Position 88 (His88) interacts with Zn(2+). Residue Asn89 is modified to Deamidated asparagine; partial. The Zn(2+) site is built by Glu90 and His95. Ser110 carries the phosphoserine modification. Asn111 is subject to Deamidated asparagine; partial. Cys119 and Cys130 are joined by a disulfide. Gln135 is modified (deamidated glutamine; partial). Residues 140-161 (ASHSERAIPVSREEKPSSAPSS) are disordered. Residues 141-155 (SHSERAIPVSREEKP) are compositionally biased toward basic and acidic residues. Residue His142 participates in Zn(2+) binding. Ser150 is a glycosylation site (O-linked (GlcNAc) serine).

The protein belongs to the small heat shock protein (HSP20) family. Heteromer composed of three CRYAA and one CRYAB subunits. Inter-subunit bridging via zinc ions enhances stability, which is crucial as there is no protein turn over in the lens. Can also form homodimers and homotetramers (dimers of dimers) which serve as the building blocks of homooligomers. Within homooligomers, the zinc-binding motif is created from residues of 3 different molecules. His-88 and Glu-90 from one molecule are ligands of the zinc ion, and His-95 and His-142 residues from additional molecules complete the site with tetrahedral coordination geometry. Part of a complex required for lens intermediate filament formation composed of BFSP1, BFSP2 and CRYAA. Post-translationally, undergoes age-dependent proteolytical cleavage at the C-terminus.

Its subcellular location is the cytoplasm. It localises to the nucleus. Functionally, contributes to the transparency and refractive index of the lens. In its oxidized form (absence of intramolecular disulfide bond), acts as a chaperone, preventing aggregation of various proteins under a wide range of stress conditions. Required for the correct formation of lens intermediate filaments as part of a complex composed of BFSP1, BFSP2 and CRYAA. The protein is Alpha-crystallin A chain (CRYAA) of Galegeeska rufescens (East African rufous sengi).